The primary structure comprises 119 residues: Protein ELF4-LIKE 2 (119 aa).

Residues 91 to 119 (SVDASSEGESTGTLKSDGKANNQKRFRSG) form a disordered region. A compositionally biased stretch (polar residues) spans 93-111 (DASSEGESTGTLKSDGKAN).

Belongs to the EARLY FLOWERING 4 family. As to quaternary structure, homodimer.

The protein localises to the nucleus. Component of the central CCA1/LHY-TOC1 feedback loop in the circadian clock that promotes clock accuracy and is required for sustained rhythms in the absence of daily light/dark cycles. This chain is Protein ELF4-LIKE 2 (EFL2), found in Arabidopsis thaliana (Mouse-ear cress).